The following is a 507-amino-acid chain: ATP synthase subunit alpha, chloroplastic (507 aa).

170–177 is an ATP binding site; that stretch reads GDRQTGKT. Position 383 is a phosphoserine (serine 383).

Belongs to the ATPase alpha/beta chains family. As to quaternary structure, F-type ATPases have 2 components, CF(1) - the catalytic core - and CF(0) - the membrane proton channel. CF(1) has five subunits: alpha(3), beta(3), gamma(1), delta(1), epsilon(1). CF(0) has four main subunits: a, b, b' and c. In terms of processing, only phosphorylated in mesophyll cells, and only when cells are grown under high rather than low light regimes (70 vs 900 umol photons/m-2/s).

It localises to the plastid. The protein localises to the chloroplast thylakoid membrane. It carries out the reaction ATP + H2O + 4 H(+)(in) = ADP + phosphate + 5 H(+)(out). Its function is as follows. Produces ATP from ADP in the presence of a proton gradient across the membrane. The alpha chain is a regulatory subunit. The protein is ATP synthase subunit alpha, chloroplastic of Zea mays (Maize).